Here is a 637-residue protein sequence, read N- to C-terminus: Phosphomethylpyrimidine synthase (637 aa).

Residues Asn242, Met271, Tyr300, His336, 356–358 (SRG), 397–400 (DGLR), and Glu436 each bind substrate. His440 serves as a coordination point for Zn(2+). Tyr463 contributes to the substrate binding site. His504 provides a ligand contact to Zn(2+). The [4Fe-4S] cluster site is built by Cys584, Cys587, and Cys592.

The protein belongs to the ThiC family. Homodimer. It depends on [4Fe-4S] cluster as a cofactor.

The enzyme catalyses 5-amino-1-(5-phospho-beta-D-ribosyl)imidazole + S-adenosyl-L-methionine = 4-amino-2-methyl-5-(phosphooxymethyl)pyrimidine + CO + 5'-deoxyadenosine + formate + L-methionine + 3 H(+). It functions in the pathway cofactor biosynthesis; thiamine diphosphate biosynthesis. Catalyzes the synthesis of the hydroxymethylpyrimidine phosphate (HMP-P) moiety of thiamine from aminoimidazole ribotide (AIR) in a radical S-adenosyl-L-methionine (SAM)-dependent reaction. The protein is Phosphomethylpyrimidine synthase of Herminiimonas arsenicoxydans.